An 88-amino-acid polypeptide reads, in one-letter code: ATP synthase subunit c 1 (88 aa).

Transmembrane regions (helical) follow at residues 4-24 (FTWV…GTAI) and 53-73 (IGLA…MIIL).

It belongs to the ATPase C chain family. As to quaternary structure, F-type ATPases have 2 components, F(1) - the catalytic core - and F(0) - the membrane proton channel. F(1) has five subunits: alpha(3), beta(3), gamma(1), delta(1), epsilon(1). F(0) has three main subunits: a(1), b(2) and c(10-14). The alpha and beta chains form an alternating ring which encloses part of the gamma chain. F(1) is attached to F(0) by a central stalk formed by the gamma and epsilon chains, while a peripheral stalk is formed by the delta and b chains.

The protein localises to the cell inner membrane. F(1)F(0) ATP synthase produces ATP from ADP in the presence of a proton or sodium gradient. F-type ATPases consist of two structural domains, F(1) containing the extramembraneous catalytic core and F(0) containing the membrane proton channel, linked together by a central stalk and a peripheral stalk. During catalysis, ATP synthesis in the catalytic domain of F(1) is coupled via a rotary mechanism of the central stalk subunits to proton translocation. Its function is as follows. Key component of the F(0) channel; it plays a direct role in translocation across the membrane. A homomeric c-ring of between 10-14 subunits forms the central stalk rotor element with the F(1) delta and epsilon subunits. The sequence is that of ATP synthase subunit c 1 from Syntrophotalea carbinolica (strain DSM 2380 / NBRC 103641 / GraBd1) (Pelobacter carbinolicus).